A 39-amino-acid chain; its full sequence is Photosystem I reaction center subunit IX (39 aa).

The chain crosses the membrane as a helical span at residues 4–24 (FLTTAPVVAAIWFTLTAGILI).

Belongs to the PsaJ family.

It localises to the cellular thylakoid membrane. Its function is as follows. May help in the organization of the PsaE and PsaF subunits. The protein is Photosystem I reaction center subunit IX of Synechococcus sp. (strain CC9311).